We begin with the raw amino-acid sequence, 633 residues long: Carbon monoxide dehydrogenase 2 (633 aa).

[4Fe-4S] cluster contacts are provided by cysteine 44, cysteine 53, cysteine 56, cysteine 61, and cysteine 73. [Ni-4Fe-5S] cluster-binding residues include histidine 264, cysteine 343, cysteine 453, cysteine 484, and cysteine 525.

The protein belongs to the Ni-containing carbon monoxide dehydrogenase family. In terms of assembly, homodimer. The cofactor is [4Fe-4S] cluster. Requires [Ni-4Fe-5S] cluster as cofactor.

It catalyses the reaction CO + 2 oxidized [2Fe-2S]-[ferredoxin] + H2O = 2 reduced [2Fe-2S]-[ferredoxin] + CO2 + 2 H(+). Its function is as follows. CODH oxidizes carbon monoxide coupled, via CooF, to the reduction of a hydrogen cation by a hydrogenase (possibly CooH). In Methanosarcina acetivorans (strain ATCC 35395 / DSM 2834 / JCM 12185 / C2A), this protein is Carbon monoxide dehydrogenase 2 (cooS2).